The primary structure comprises 1578 residues: FERM and PDZ domain-containing protein 1 (1578 aa).

Residues 57–135 (TVKIDKDTLL…SLSITVVRCT (79 aa)) enclose the PDZ domain. The region spanning 181-496 (NVLKLYLENG…GYYRLLVDPV (316 aa)) is the FERM domain. 3 disordered regions span residues 555 to 616 (KEEQ…EEDD), 720 to 743 (SDSS…QGWT), and 759 to 831 (PLAF…VKKY). Positions 720–729 (SDSSESTASR) are enriched in polar residues. Over residues 730–742 (QGGAPPAWGQQGW) the composition is skewed to low complexity. Polar residues predominate over residues 793–811 (AEPSATSLQNKASTSSPEN). The segment covering 822 to 831 (PSRRGGVKKY) has biased composition (basic residues). Residues 924–931 (EPETMETK) are important for interaction with GPSM2. 3 disordered regions span residues 950–1030 (PNNK…LASN), 1070–1194 (KYTE…QGCQ), and 1347–1374 (PQPE…SAGS). Positions 968–986 (TPHCSNPGSSGPDTAQARP) are enriched in polar residues. The span at 1100–1117 (TKEEPQGQLSLERDREVT) shows a compositional bias: basic and acidic residues. Residues 1139–1150 (DVSNNVSQTLDI) are compositionally biased toward polar residues.

Interacts with GPSM1. Interacts with GPSM2 (via TPR repeat region).

It is found in the cytoplasm. Its subcellular location is the cytosol. The protein localises to the cell membrane. In terms of biological role, stabilizes membrane-bound GPSM1, and thereby promotes its interaction with GNAI1. This is FERM and PDZ domain-containing protein 1 (FRMPD1) from Homo sapiens (Human).